A 493-amino-acid chain; its full sequence is Argininosuccinate lyase (493 aa).

Belongs to the lyase 1 family. Argininosuccinate lyase subfamily.

It is found in the cytoplasm. The enzyme catalyses 2-(N(omega)-L-arginino)succinate = fumarate + L-arginine. It functions in the pathway amino-acid biosynthesis; L-arginine biosynthesis; L-arginine from L-ornithine and carbamoyl phosphate: step 3/3. This is Argininosuccinate lyase from Clavibacter sepedonicus (Clavibacter michiganensis subsp. sepedonicus).